Consider the following 557-residue polypeptide: MFS-type transporter clz4 (557 aa).

Helical transmembrane passes span 22 to 42 (LIIVILTLGVVLFVINIDHNG), 59 to 79 (SITWAGSSQLIATTVFSVLYG), 89 to 109 (ALFVSALWVFSIAELGCGFAT), 120 to 140 (LTGASGGGIGNLSIIIATDVV), 150 to 170 (AVVAPFMVLGNICGPLVAAGV), 179 to 199 (GLFWLISPLGVLSAVLAGYIL), 217 to 237 (WLGSFTSTIAIVGFMVAVSGP), 245 to 265 (SLLVISLLSVSGVAFLAFLFI), 269 to 289 (LATLPVIPLTIFAIPDVSALL), 319 to 339 (VISGVLLFPIIAVQVVVSMIA), 346 to 366 (SGQYGLTIRLGVALLLIGSLL), 379 to 399 (VIIVLLVIGIGVGAANQPMVI), 419 to 439 (FFRFLGSACGVVMSAAILQST), and 479 to 499 (HVYIASAAASVLCSLGLFVWK). The span at 505-523 (SRPTENNDDIEHAPARGIE) shows a compositional bias: basic and acidic residues. The tract at residues 505 to 557 (SRPTENNDDIEHAPARGIEREDEQSSLIYDREPSAVSYGTVEAGEPNRLRRGG) is disordered.

The protein belongs to the major facilitator superfamily. TCR/Tet family.

The protein resides in the membrane. Functionally, MFS-type transporter; part of the gene cluster that mediates the biosynthesis of squalestatin S1 (SQS1, also known as zaragozic acid A), a heavily oxidized fungal polyketide that offers potent cholesterol lowering activity by targeting squalene synthase (SS). In Cochliobolus lunatus (Filamentous fungus), this protein is MFS-type transporter clz4.